The following is a 219-amino-acid chain: Octanoyltransferase (219 aa).

The BPL/LPL catalytic domain maps to 31-206 (DEDVDQIWLV…ELVELLGYDQ (176 aa)). Residues 70 to 77 (RGGQVTYH), 137 to 139 (SLG), and 150 to 152 (GLA) each bind substrate. Cysteine 168 (acyl-thioester intermediate) is an active-site residue.

Belongs to the LipB family.

The protein localises to the cytoplasm. It catalyses the reaction octanoyl-[ACP] + L-lysyl-[protein] = N(6)-octanoyl-L-lysyl-[protein] + holo-[ACP] + H(+). It participates in protein modification; protein lipoylation via endogenous pathway; protein N(6)-(lipoyl)lysine from octanoyl-[acyl-carrier-protein]: step 1/2. Catalyzes the transfer of endogenously produced octanoic acid from octanoyl-acyl-carrier-protein onto the lipoyl domains of lipoate-dependent enzymes. Lipoyl-ACP can also act as a substrate although octanoyl-ACP is likely to be the physiological substrate. This chain is Octanoyltransferase, found in Vibrio atlanticus (strain LGP32) (Vibrio splendidus (strain Mel32)).